The primary structure comprises 421 residues: Cyclin-A1 (421 aa).

The interval 1–20 (MRRHSSKSGVALPPVGQGPD) is disordered.

The protein belongs to the cyclin family. Cyclin AB subfamily. As to quaternary structure, interacts with the CDK2 and the CDC2 protein kinases to form a serine/threonine kinase holoenzyme complex. The cyclin subunit imparts substrate specificity to the complex. Does not bind CDK4 and CDK5 (in vitro). The cyclin A1-CDK2 complex interacts with transcription factor E2F-1 and RB proteins. Found in a complex with CDK2, CABLES1 and CCNE1. Interacts with INCA1 and KLHDC9. In terms of processing, polyubiquitinated via 'Lys-11'-linked ubiquitin by the anaphase-promoting complex (APC/C), leading to its degradation by the proteasome. Deubiquitinated and stabilized by USP37 enables entry into S phase. Ubiquitinated during the G1 phase by the SCF(FBXO31) complex, leading to its proteasomal degradation.

The protein resides in the nucleus. In terms of biological role, may be involved in the control of the cell cycle at the G1/S (start) and G2/M (mitosis) transitions. May primarily function in the control of the germline meiotic cell cycle and additionally in the control of mitotic cell cycle in some somatic cells. This chain is Cyclin-A1 (Ccna1), found in Rattus norvegicus (Rat).